The following is a 440-amino-acid chain: Glutamyl-tRNA reductase (440 aa).

Substrate is bound by residues 47 to 50 (TCNR), Ser110, 115 to 117 (ERE), and Gln121. Cys48 functions as the Nucleophile in the catalytic mechanism. Residue 192–197 (GTGAYA) participates in NADP(+) binding.

This sequence belongs to the glutamyl-tRNA reductase family. As to quaternary structure, homodimer.

The enzyme catalyses (S)-4-amino-5-oxopentanoate + tRNA(Glu) + NADP(+) = L-glutamyl-tRNA(Glu) + NADPH + H(+). Its pathway is porphyrin-containing compound metabolism; protoporphyrin-IX biosynthesis; 5-aminolevulinate from L-glutamyl-tRNA(Glu): step 1/2. In terms of biological role, catalyzes the NADPH-dependent reduction of glutamyl-tRNA(Glu) to glutamate 1-semialdehyde (GSA). The chain is Glutamyl-tRNA reductase from Paenarthrobacter aurescens (strain TC1).